The primary structure comprises 233 residues: Cilia- and flagella-associated protein 299 (233 aa).

In terms of tissue distribution, abundantly expressed in testis, specifically in spermatogonia and primary spermatocytes but not in secondary spermatocytes and spermatids.

It localises to the cytoplasm. The protein localises to the nucleus. May be involved in spermatogenesis. The protein is Cilia- and flagella-associated protein 299 of Mus musculus (Mouse).